The following is a 478-amino-acid chain: UDP-N-acetylmuramate--L-alanine ligase (478 aa).

Residue 120-126 (GSHGKTT) participates in ATP binding.

Belongs to the MurCDEF family.

The protein resides in the cytoplasm. It catalyses the reaction UDP-N-acetyl-alpha-D-muramate + L-alanine + ATP = UDP-N-acetyl-alpha-D-muramoyl-L-alanine + ADP + phosphate + H(+). Its pathway is cell wall biogenesis; peptidoglycan biosynthesis. In terms of biological role, cell wall formation. This Rickettsia bellii (strain OSU 85-389) protein is UDP-N-acetylmuramate--L-alanine ligase.